The sequence spans 233 residues: Sugar fermentation stimulation protein homolog (233 aa).

Belongs to the SfsA family.

In Acetivibrio thermocellus (strain ATCC 27405 / DSM 1237 / JCM 9322 / NBRC 103400 / NCIMB 10682 / NRRL B-4536 / VPI 7372) (Clostridium thermocellum), this protein is Sugar fermentation stimulation protein homolog.